The following is a 155-amino-acid chain: Probable methanogenesis regulatory protein FilR2 (155 aa).

The Response regulatory domain maps to 18–142 (IILLVEDNNA…DLKRTVEEIK (125 aa)). Position 75 is a 4-aspartylphosphate (Asp-75).

Phosphorylated by FilI.

In terms of biological role, member of the two-component regulatory system FilI/FilRs, which is involved in the regulation of methanogenesis. The polypeptide is Probable methanogenesis regulatory protein FilR2 (Methanothrix harundinacea (strain 6Ac) (Methanosaeta harundinacea)).